Reading from the N-terminus, the 106-residue chain is UPF0060 membrane protein Rleg2_1018 (106 aa).

Transmembrane regions (helical) follow at residues 4–24 (IIYAFAAVFEIGGCFAFWAWL), 30–50 (VWWLAPGMVSLALFAWLLTLV), 58–78 (TFAAYGGIYIAASLLWLWLVE), and 86–106 (DIGGALVCLAGTSIILFGPRG).

This sequence belongs to the UPF0060 family.

It is found in the cell inner membrane. The sequence is that of UPF0060 membrane protein Rleg2_1018 from Rhizobium leguminosarum bv. trifolii (strain WSM2304).